The following is a 367-amino-acid chain: Diphthine methyltransferase homolog (367 aa).

WD repeat units follow at residues 84–124 (NFNS…KKLE), 132–173 (SLSN…SKVT), 180–220 (AHDY…NHND), and 234–274 (RCDM…QPII).

Belongs to the DPH7 family.

It carries out the reaction diphthine methyl ester-[translation elongation factor 2] + H2O = diphthine-[translation elongation factor 2] + methanol + H(+). It participates in protein modification; peptidyl-diphthamide biosynthesis. Functionally, catalyzes the demethylation of diphthine methyl ester to form diphthine, an intermediate diphthamide biosynthesis, a post-translational modification of histidine which occurs in translation elongation factor 2 (efbA). This is Diphthine methyltransferase homolog (wdr85) from Dictyostelium discoideum (Social amoeba).